Reading from the N-terminus, the 379-residue chain is Very late expression factor 1 (379 aa).

The region spanning 169–348 (VIDTILNFIN…YNIGLDETSS (180 aa)) is the Tyr recombinase domain. Active-site residues include Arg-210, Lys-239, Arg-303, and His-326. Tyr-335 (O-(3'-phospho-DNA)-tyrosine intermediate) is an active-site residue. Over residues 346 to 358 (TSSEEENNNDDDD) the composition is skewed to acidic residues. Positions 346–379 (TSSEEENNNDDDDAQHNRNSSGSSGESLLYYRNE) are disordered. A compositionally biased stretch (low complexity) spans 362–379 (NRNSSGSSGESLLYYRNE).

The protein belongs to the 'phage' integrase family.

Its function is as follows. Plays a role in nucleocapsid assembly and serves an essential function during the final stages of the DNA packaging process. Participates in the processing of branched DNA molecules at the late stages of viral genome replication. The sequence is that of Very late expression factor 1 (VLF-1) from Lepidoptera (butterflies and moths).